The following is a 332-amino-acid chain: Gibberellin 2-beta-dioxygenase (332 aa).

The Fe2OG dioxygenase domain occupies 175–280 (KSDSCFRLNH…RLSMIYFGGP (106 aa)). Histidine 204, aspartate 206, and histidine 261 together coordinate Fe cation. Residue arginine 271 is part of the active site.

Belongs to the iron/ascorbate-dependent oxidoreductase family. GA2OX subfamily. Requires Fe cation as cofactor.

The catalysed reaction is gibberellin A1 + 2-oxoglutarate + O2 = gibberellin A8 + succinate + CO2. It functions in the pathway plant hormone biosynthesis; gibberellin biosynthesis. Functionally, catalyzes the 2-beta-hydroxylation of several biologically active gibberellins, leading to the homeostatic regulation of their endogenous level. Catabolism of gibberellins (GAs) plays a central role in plant development. Converts GA9/GA20 to GA51/GA29 and GA4/GA1 to GA34/GA8. In Phaseolus coccineus (Scarlet runner bean), this protein is Gibberellin 2-beta-dioxygenase (GA2OX1).